The chain runs to 292 residues: ATP synthase subunit a (292 aa).

6 helical membrane-spanning segments follow: residues 37–57 (IDSV…FWLC), 96–116 (FIAP…AMDM), 144–164 (VVPT…LVLC), 192–212 (PVFA…EYVA), 230–250 (LVFM…SGVL), and 263–283 (AIFH…LALI).

This sequence belongs to the ATPase A chain family. In terms of assembly, F-type ATPases have 2 components, CF(1) - the catalytic core - and CF(0) - the membrane proton channel. CF(1) has five subunits: alpha(3), beta(3), gamma(1), delta(1), epsilon(1). CF(0) has three main subunits: a(1), b(2) and c(9-12). The alpha and beta chains form an alternating ring which encloses part of the gamma chain. CF(1) is attached to CF(0) by a central stalk formed by the gamma and epsilon chains, while a peripheral stalk is formed by the delta and b chains.

It localises to the cell inner membrane. Its function is as follows. Key component of the proton channel; it plays a direct role in the translocation of protons across the membrane. The protein is ATP synthase subunit a of Paracidovorax citrulli (strain AAC00-1) (Acidovorax citrulli).